Consider the following 591-residue polypeptide: Aspartate--tRNA(Asp/Asn) ligase (591 aa).

Residue E176 participates in L-aspartate binding. Positions 200–203 are aspartate; the sequence is QLFK. R222 provides a ligand contact to L-aspartate. ATP is bound by residues 222-224 and Q231; that span reads RDE. H450 is a binding site for L-aspartate. E484 contacts ATP. R491 contributes to the L-aspartate binding site. 536–539 serves as a coordination point for ATP; the sequence is GLDR.

It belongs to the class-II aminoacyl-tRNA synthetase family. Type 1 subfamily. As to quaternary structure, homodimer.

Its subcellular location is the cytoplasm. It catalyses the reaction tRNA(Asx) + L-aspartate + ATP = L-aspartyl-tRNA(Asx) + AMP + diphosphate. Its function is as follows. Aspartyl-tRNA synthetase with relaxed tRNA specificity since it is able to aspartylate not only its cognate tRNA(Asp) but also tRNA(Asn). Reaction proceeds in two steps: L-aspartate is first activated by ATP to form Asp-AMP and then transferred to the acceptor end of tRNA(Asp/Asn). The polypeptide is Aspartate--tRNA(Asp/Asn) ligase (Bacillus anthracis (strain A0248)).